Here is an 89-residue protein sequence, read N- to C-terminus: UPF0367 protein CYB_2632 (89 aa).

The disordered stretch occupies residues 69 to 89 (SKSGSASPMGTRPGFLAQLQS).

It belongs to the UPF0367 family.

This chain is UPF0367 protein CYB_2632, found in Synechococcus sp. (strain JA-2-3B'a(2-13)) (Cyanobacteria bacterium Yellowstone B-Prime).